The sequence spans 302 residues: Tetrahydromethanopterin S-methyltransferase subunit E (302 aa).

Helical transmembrane passes span 3–23, 86–106, 132–152, 155–175, 233–253, and 259–279; these read PLISMGVLALIGVAATIAGAS, PLFALVFGSLIAACVHATFAV, ITPIMGYAFITTFCILVVSYL, VVLGHPFPLTMLAFIWGITIG, PVTGLAFGMTVFLGSWITTIF, and LGWLSVIAGIVIVFILIIWNW.

The protein belongs to the MtrE family. The complex is composed of 8 subunits; MtrA, MtrB, MtrC, MtrD, MtrE, MtrF, MtrG and MtrH.

It is found in the cell membrane. The enzyme catalyses 5-methyl-5,6,7,8-tetrahydromethanopterin + coenzyme M + 2 Na(+)(in) = 5,6,7,8-tetrahydromethanopterin + methyl-coenzyme M + 2 Na(+)(out). It participates in one-carbon metabolism; methanogenesis from CO(2); methyl-coenzyme M from 5,10-methylene-5,6,7,8-tetrahydromethanopterin: step 2/2. Functionally, part of a complex that catalyzes the formation of methyl-coenzyme M and tetrahydromethanopterin from coenzyme M and methyl-tetrahydromethanopterin. This is an energy-conserving, sodium-ion translocating step. The chain is Tetrahydromethanopterin S-methyltransferase subunit E from Methanosarcina barkeri (strain Fusaro / DSM 804).